The primary structure comprises 411 residues: Cytochrome P450 monooxygenase sirE (411 aa).

N-linked (GlcNAc...) asparagine glycosylation is found at N12 and N149. A helical membrane pass occupies residues 181 to 203 (FLNVISIFTVMMASLNVLYDILA). N342 is a glycosylation site (N-linked (GlcNAc...) asparagine). C352 is a heme binding site.

This sequence belongs to the cytochrome P450 family. It depends on heme as a cofactor.

The protein resides in the membrane. The protein operates within mycotoxin biosynthesis. In terms of biological role, cytochrome P450 monooxygenase; part of the gene cluster that mediates the biosynthesis of sirodesmin PL, an epipolythiodioxopiperazine (ETP) characterized by a disulfide bridged cyclic dipeptide and that acts as a phytotoxin which is involved in the blackleg didease of canola. SirD catalyzes the O-prenylation of L-tyrosine (L-Tyr) in the presence of dimethylallyl diphosphate (DMAPP) to yield 4-O-dimethylallyl-L-Tyr, and therefore represents probably the first pathway-specific enzyme in the biosynthesis of sirodesmin PL. 4-O-dimethylallyl-L-Tyr, then undergoes condensation with L-Ser in a reaction catalyzed by the non-ribosomal peptide synthase sirP to form the diketopiperazine (DKP) backbone. Further bishydroxylation of the DKP performed by the cytochrome P450 monooxygenase sirC leads to the production of the intermediate phomamide. This step is essential to form the reactive thiol group required for toxicity of sirodesmin PL. The next steps of sirodesmin biosynthesis are not well understood yet, but some predictions could be made from intermediate compounds identification. Phomamide is converted into phomalizarine via oxidation, probably by sirT. Further oxidation, methylation (by sirM or sirN) and reduction steps convert phomalizarine to deacetyl sirodesmin. Finally, acetyltransferase sirH probably acetylates deacetyl sirodesmin to produce sirodesmin PL. The chain is Cytochrome P450 monooxygenase sirE from Leptosphaeria maculans (Blackleg fungus).